Consider the following 255-residue polypeptide: MTNNQQQPITIKISEFEGPLDLLLHLIRQNKMDIYDIPIAAITQQYLDYLHSMRALKLDIAGDYLVMAATLMTIKSRFLLPQPEPDEMDEDNEDDDPRDSLVAELLAYKVYQEAAGELREKEQARHQHFTREAMLVPADLSAPKLTAGITLDDLQAAFRQLVAKRRRVRPLTKTVVAETINIDERMTQITTQLQHQPQGLDFADLFTVSASDEMLVTTFMAVLELTKQDQVALQQAEPLSPIHLYLRQDEQHDEH.

This sequence belongs to the ScpA family. In terms of assembly, component of a cohesin-like complex composed of ScpA, ScpB and the Smc homodimer, in which ScpA and ScpB bind to the head domain of Smc. The presence of the three proteins is required for the association of the complex with DNA.

The protein resides in the cytoplasm. In terms of biological role, participates in chromosomal partition during cell division. May act via the formation of a condensin-like complex containing Smc and ScpB that pull DNA away from mid-cell into both cell halves. This Lactiplantibacillus plantarum (strain ATCC BAA-793 / NCIMB 8826 / WCFS1) (Lactobacillus plantarum) protein is Segregation and condensation protein A.